We begin with the raw amino-acid sequence, 1196 residues long: Contactin rig-6 (1196 aa).

Positions 1-19 (MMMLIRCISIFLLFGFVNA) are cleaved as a signal peptide. Residues N100 and N195 are each glycosylated (N-linked (GlcNAc...) asparagine). Ig-like C2-type domains lie at 144–225 (PQIS…ARNS) and 232–319 (PPIL…CSLS). 2 cysteine pairs are disulfide-bonded: C169–C220 and C263–C316. The N-linked (GlcNAc...) asparagine glycan is linked to N343. Ig-like C2-type domains follow at residues 355–438 (PQIF…VKLR), 441–533 (PSIL…ALLT), 539–626 (PVFP…VQLI), and 631–730 (PSIK…EFVT). C372 and C420 are oxidised to a cystine. N457 carries N-linked (GlcNAc...) asparagine glycosylation. 2 disulfides stabilise this stretch: C462-C517 and C562-C610. The N-linked (GlcNAc...) asparagine glycan is linked to N644. C653 and C718 are oxidised to a cystine. Fibronectin type-III domains follow at residues 736 to 844 (SPIA…TAPG), 849 to 961 (TIDN…SHGE), 963 to 1057 (KKVS…TKQH), and 1064 to 1168 (LIGK…LGSP). 8 N-linked (GlcNAc...) asparagine glycosylation sites follow: N895, N925, N945, N974, N979, N986, N1002, and N1092. Residues 1174–1194 (TTGSSDVPIPSLLLLLLLLLW) traverse the membrane as a helical segment. The GPI-anchor amidated serine moiety is linked to residue S1177. Residues 1178–1196 (SDVPIPSLLLLLLLLLWRL) constitute a propeptide, removed in mature form.

This sequence belongs to the immunoglobulin superfamily. Contactin family. In terms of assembly, interacts with sax-7; the interaction establishes synaptic connections between neurons. As to expression, expressed in neurons including the I1 and I3 pharyngeal interneurons, NSM and VNC motor neurons, HSN and CAN neurons, the ALM and PLM touch receptor neurons and other unidentified head neurons. Expressed in AVG interneurons. Also expressed in somatic muscles, the excretory canal, the excretory cell and the hypodermis.

The protein localises to the cell membrane. It is found in the perikaryon. Its subcellular location is the cell projection. The protein resides in the axon. It localises to the synapse. The protein localises to the cytoplasm. Its function is as follows. Probable cell adhesion protein involved in patterning of the nervous system, playing a role in ALM and PLM touch receptor axon growth and VNC axon navigation. By associating with the transmembrane protein sax-7, mediates axonal interactions to establish synaptic connections between the AVG interneuron and the two PHC sensory neurons. Also required for non-neuronal cell migration in the excretory canal, regulating excretory canal elongation and excretory cell morphogenesis. Plays a role in regulating male mating behavior. In Caenorhabditis elegans, this protein is Contactin rig-6.